Reading from the N-terminus, the 276-residue chain is Undecaprenyl-diphosphatase (276 aa).

The next 7 helical transmembrane spans lie at 12 to 34 (LGIV…IVVG), 43 to 63 (TATA…MWEF), 85 to 105 (FNLL…ADLI), 108 to 128 (WLFN…IMLW), 185 to 205 (TEFS…YSLF), 218 to 238 (IFAI…RALL), and 249 to 269 (FAWY…LHLI).

The protein belongs to the UppP family.

The protein resides in the cell inner membrane. It catalyses the reaction di-trans,octa-cis-undecaprenyl diphosphate + H2O = di-trans,octa-cis-undecaprenyl phosphate + phosphate + H(+). In terms of biological role, catalyzes the dephosphorylation of undecaprenyl diphosphate (UPP). Confers resistance to bacitracin. This Ectopseudomonas mendocina (strain ymp) (Pseudomonas mendocina) protein is Undecaprenyl-diphosphatase.